The following is a 313-amino-acid chain: E3 ubiquitin-protein ligase RNF126 (313 aa).

Ala2 bears the N-acetylalanine mark. Residue Ser5 is modified to Phosphoserine. Positions Ser5 to Ala100 are required for interaction with BAG6. Zn(2+)-binding residues include Cys13, Cys16, Cys29, and Cys32. The C4-type zinc-finger motif lies at Cys13 to Cys32. Disordered regions lie at residues Glu42–Gln63 and Thr95–Arg128. Positions Thr47–Gln63 are enriched in polar residues. Residues Asp103–His116 are compositionally biased toward basic and acidic residues. Positions Gln117–Arg128 are enriched in basic residues. The segment at Thr202 to Asn306 is sufficient for interaction with AICDA. Residues Cys231–Arg272 form an RING-type zinc finger. Residues Asn279–Ser313 are disordered. The span at Ser293–Ser313 shows a compositional bias: low complexity.

In terms of assembly, interacts with CCDC50, EGFR, FLT3 and SCAMP3. Interacts with BAG6 (via ubiquitin-like domain); required for BAG6-dependent ubiquitination of proteins mislocalized to the cytosol. Interacts with CDKN1A. Interacts with AICDA. Post-translationally, ubiquitinated. May undergo autoubiquitination. Detected in B-cells (at protein level).

It is found in the cytoplasm. It localises to the nucleus. The enzyme catalyses S-ubiquitinyl-[E2 ubiquitin-conjugating enzyme]-L-cysteine + [acceptor protein]-L-lysine = [E2 ubiquitin-conjugating enzyme]-L-cysteine + N(6)-ubiquitinyl-[acceptor protein]-L-lysine.. It participates in protein modification; protein ubiquitination. Its function is as follows. E3 ubiquitin-protein ligase that mediates ubiquitination oF target proteins. Depending on the associated E2 ligase, mediates 'Lys-27'-, 'Lys-29'-, 'Lys-48'- and/or 'Lys-63'-linked polyubiquitination of substrates. Part of a BAG6-dependent quality control process ensuring that proteins of the secretory pathway that are mislocalized to the cytosol are degraded by the proteasome. Probably acts by providing the ubiquitin ligase activity associated with the BAG6 complex and be responsible for ubiquitination of the hydrophobic mislocalized proteins and their targeting to the proteasome. May also play a role in the endosomal recycling of IGF2R, the cation-independent mannose-6-phosphate receptor. May play a role in the endosomal sorting and degradation of several membrane receptors including EGFR, FLT3, MET and CXCR4, by mediating their ubiquitination. By ubiquitinating CDKN1A/p21 and targeting it for degradation, may also promote cell proliferation. May monoubiquitinate AICDA. Acts as a regulator of DNA repair by mediating 'Lys-27'- and 'Lys-29'-linked polyubiquitination of MRE11, thereby promoting the exonuclease activity of MRE11. The protein is E3 ubiquitin-protein ligase RNF126 of Mus musculus (Mouse).